A 145-amino-acid polypeptide reads, in one-letter code: Oocyte zinc finger protein XlCOF8.4I (145 aa).

The segment at 1–25 (HKREADFCSKGNLTNPEISPVEHYP) is disordered. Residues 123–145 (LSCSECGKCFSTYHVLARHQKTH) form a C2H2-type zinc finger.

It belongs to the krueppel C2H2-type zinc-finger protein family.

The protein localises to the nucleus. Its function is as follows. May be involved in transcriptional regulation. In Xenopus laevis (African clawed frog), this protein is Oocyte zinc finger protein XlCOF8.4I.